Consider the following 301-residue polypeptide: tRNA dimethylallyltransferase (301 aa).

8 to 15 (GPTAVGKT) serves as a coordination point for ATP. Position 10–15 (10–15 (TAVGKT)) interacts with substrate. An interaction with substrate tRNA region spans residues 33–36 (DSRQ).

This sequence belongs to the IPP transferase family. Monomer. Mg(2+) is required as a cofactor.

It carries out the reaction adenosine(37) in tRNA + dimethylallyl diphosphate = N(6)-dimethylallyladenosine(37) in tRNA + diphosphate. Its function is as follows. Catalyzes the transfer of a dimethylallyl group onto the adenine at position 37 in tRNAs that read codons beginning with uridine, leading to the formation of N6-(dimethylallyl)adenosine (i(6)A). The chain is tRNA dimethylallyltransferase from Thermosipho africanus (strain TCF52B).